Consider the following 266-residue polypeptide: tRNA pseudouridine synthase A (266 aa).

The active-site Nucleophile is Asp-53. Tyr-109 is a substrate binding site.

The protein belongs to the tRNA pseudouridine synthase TruA family.

It carries out the reaction uridine(38/39/40) in tRNA = pseudouridine(38/39/40) in tRNA. In terms of biological role, formation of pseudouridine at positions 38, 39 and 40 in the anticodon stem and loop of transfer RNAs. The sequence is that of tRNA pseudouridine synthase A from Methanocella arvoryzae (strain DSM 22066 / NBRC 105507 / MRE50).